The sequence spans 460 residues: Cysteine--tRNA ligase (460 aa).

C28 is a binding site for Zn(2+). The 'HIGH' region signature appears at 30–40 (MTVYDYCHLGH). The Zn(2+) site is built by C209, H234, and E238. Positions 266 to 270 (KMSKS) match the 'KMSKS' region motif. Position 269 (K269) interacts with ATP.

Belongs to the class-I aminoacyl-tRNA synthetase family. In terms of assembly, monomer. It depends on Zn(2+) as a cofactor.

It localises to the cytoplasm. The enzyme catalyses tRNA(Cys) + L-cysteine + ATP = L-cysteinyl-tRNA(Cys) + AMP + diphosphate. The protein is Cysteine--tRNA ligase of Pseudomonas putida (strain W619).